The following is a 784-amino-acid chain: LPS-assembly protein LptD (784 aa).

The N-terminal stretch at 1-24 (MKKRIPTLLATMIATALYSQQGLA) is a signal peptide. 2 disulfide bridges follow: cysteine 31–cysteine 724 and cysteine 173–cysteine 725.

Belongs to the LptD family. As to quaternary structure, component of the lipopolysaccharide transport and assembly complex. Interacts with LptE and LptA. Contains two intramolecular disulfide bonds.

The protein localises to the cell outer membrane. Functionally, together with LptE, is involved in the assembly of lipopolysaccharide (LPS) at the surface of the outer membrane. The polypeptide is LPS-assembly protein LptD (Shigella flexneri).